The following is a 1340-amino-acid chain: Pleckstrin homology domain-containing family G member 2 (1340 aa).

The span at 34 to 44 (TPTAQAATTMA) shows a compositional bias: polar residues. The interval 34 to 76 (TPTAQAATTMASPRGSGSSTSLSTVGSEGDPSPACSASRPEPL) is disordered. The span at 45–62 (SPRGSGSSTSLSTVGSEG) shows a compositional bias: low complexity. Positions 98–279 (RLERVAREIV…TAVAWYINDM (182 aa)) constitute a DH domain. Positions 309–407 (ELVLEGTFRG…WIHCLQRLFF (99 aa)) constitute a PH domain. 7 disordered regions span residues 431-623 (PKSK…IPCI), 684-743 (LPGP…SVQG), 820-855 (MQRA…EAEP), 907-979 (NVSD…PSAG), 991-1028 (TTSL…EQRD), 1047-1069 (PVCT…STDF), and 1125-1146 (PLSS…SLTD). Residue T441 is modified to Phosphothreonine. 2 positions are modified to phosphoserine: S446 and S465. The segment covering 560 to 572 (DIPKFPRDSRVPV) has biased composition (basic and acidic residues). A compositionally biased stretch (acidic residues) spans 588–600 (SEEEEEEDLETDE). 5 stretches are compositionally biased toward polar residues: residues 703-714 (SGSNPGRLSESP), 820-831 (MQRAETRASTNA), 907-921 (NVSD…SSNS), 930-945 (GQSN…TSLL), and 956-972 (PTAS…SQVP). Polar residues predominate over residues 1049–1059 (CTSSPDQQIPA). T1215 carries the post-translational modification Phosphothreonine. A phosphoserine mark is found at S1219 and S1269. The disordered stretch occupies residues 1250–1340 (RRQGPGGEGT…VGPSQGPGGS (91 aa)). The segment covering 1276 to 1288 (PSPPPQPQPPAPP) has biased composition (pro residues). Residues 1319–1333 (HPALLAAPHPGAVGP) are compositionally biased toward low complexity.

Expressed in thymus, skeletal muscle, lung, testis, uterus, pancreas and heart and also expressed during embryogenesis.

In terms of biological role, may be a transforming oncogene with exchange activity for CDC42. May be a guanine-nucleotide exchange factor (GEF) for RAC1 and CDC42. Activated by the binding to subunits beta and gamma of the heterotrimeric guanine nucleotide-binding protein (G protein). Involved in the regulation of actin polymerization. The polypeptide is Pleckstrin homology domain-containing family G member 2 (Plekhg2) (Mus musculus (Mouse)).